The primary structure comprises 756 residues: Polyribonucleotide nucleotidyltransferase (756 aa).

The Mg(2+) site is built by aspartate 547 and aspartate 553. In terms of domain architecture, KH spans 613 to 672 (PRITSVTIPVNKIGELIGPKGKTINAITEETGADVSIEEDGTVYISAATGEAADAAIDRV). In terms of domain architecture, S1 motif spans 684–753 (GERFLGTVVK…NRGKISLVPV (70 aa)).

The protein belongs to the polyribonucleotide nucleotidyltransferase family. It depends on Mg(2+) as a cofactor.

Its subcellular location is the cytoplasm. The catalysed reaction is RNA(n+1) + phosphate = RNA(n) + a ribonucleoside 5'-diphosphate. Its function is as follows. Involved in mRNA degradation. Catalyzes the phosphorolysis of single-stranded polyribonucleotides processively in the 3'- to 5'-direction. The sequence is that of Polyribonucleotide nucleotidyltransferase from Corynebacterium aurimucosum (strain ATCC 700975 / DSM 44827 / CIP 107346 / CN-1) (Corynebacterium nigricans).